Consider the following 319-residue polypeptide: FAD-dependent oxidoreductase FVFD30 (319 aa).

Positions 6, 18, and 25 each coordinate FAD. NAD(+) contacts are provided by Lys129 and Gly188. NADP(+) contacts are provided by Lys129 and Gly188. The FAD site is built by Asp228 and Tyr265. Position 228 (Asp228) interacts with 6-hydroxy-FAD. Tyr265 lines the NAD(+) pocket. Position 265 (Tyr265) interacts with NADP(+). The helical transmembrane segment at 281–301 threads the bilayer; it reads GVGYFGVWWGIVIGGWLASLL.

The protein belongs to the FAD-dependent oxidoreductase family.

The protein resides in the membrane. Its function is as follows. Probable FAD-dependent oxidoreductase that plays a role in the regulation of fruiting body development. The chain is FAD-dependent oxidoreductase FVFD30 from Flammulina velutipes (Agaricus velutipes).